The sequence spans 339 residues: Probable E3 ubiquitin-protein ligase BAH1-like 1 (339 aa).

In terms of domain architecture, SPX spans 1–163; the sequence is MKFGAIYEEY…GSVSGRDFKS (163 aa). The RING-type zinc-finger motif lies at 235-284; the sequence is CPICLDTLFNPYALSCGHLFCKGCACGAASVYIFQGVKSAPPEAKCPVCR.

This sequence belongs to the RING-type zinc finger family.

The catalysed reaction is S-ubiquitinyl-[E2 ubiquitin-conjugating enzyme]-L-cysteine + [acceptor protein]-L-lysine = [E2 ubiquitin-conjugating enzyme]-L-cysteine + N(6)-ubiquitinyl-[acceptor protein]-L-lysine.. It participates in protein modification; protein ubiquitination. The polypeptide is Probable E3 ubiquitin-protein ligase BAH1-like 1 (Oryza sativa subsp. indica (Rice)).